Consider the following 207-residue polypeptide: Ribosomal RNA small subunit methyltransferase G (207 aa).

S-adenosyl-L-methionine is bound by residues Gly73, Leu78, 124–125 (VE), and Arg139.

This sequence belongs to the methyltransferase superfamily. RNA methyltransferase RsmG family.

The protein resides in the cytoplasm. The enzyme catalyses guanosine(527) in 16S rRNA + S-adenosyl-L-methionine = N(7)-methylguanosine(527) in 16S rRNA + S-adenosyl-L-homocysteine. Specifically methylates the N7 position of guanine in position 527 of 16S rRNA. The polypeptide is Ribosomal RNA small subunit methyltransferase G (Salmonella agona (strain SL483)).